The primary structure comprises 286 residues: Shikimate dehydrogenase (NADP(+)) (286 aa).

Shikimate is bound by residues 22 to 24 (SRS) and threonine 71. Lysine 75 (proton acceptor) is an active-site residue. Glutamate 87 lines the NADP(+) pocket. Shikimate is bound by residues asparagine 96 and aspartate 111. Residues 136 to 140 (GAGGA), 160 to 165 (NRTPER), and isoleucine 225 each bind NADP(+). Tyrosine 227 contacts shikimate. Residue glycine 248 participates in NADP(+) binding.

It belongs to the shikimate dehydrogenase family. As to quaternary structure, homodimer.

It catalyses the reaction shikimate + NADP(+) = 3-dehydroshikimate + NADPH + H(+). The protein operates within metabolic intermediate biosynthesis; chorismate biosynthesis; chorismate from D-erythrose 4-phosphate and phosphoenolpyruvate: step 4/7. Its function is as follows. Involved in the biosynthesis of the chorismate, which leads to the biosynthesis of aromatic amino acids. Catalyzes the reversible NADPH linked reduction of 3-dehydroshikimate (DHSA) to yield shikimate (SA). This is Shikimate dehydrogenase (NADP(+)) from Rhizobium meliloti (strain 1021) (Ensifer meliloti).